The sequence spans 1077 residues: Eukaryotic translation initiation factor 2-alpha kinase pek-1 (1077 aa).

Positions 1–23 are cleaved as a signal peptide; sequence MSVYYIVLAGFLLFMALVPFNAG. The Lumenal segment spans residues 24–453; that stretch reads QQYIDDDIEV…ITLMQTIFSY (430 aa). Asn-206 carries an N-linked (GlcNAc...) asparagine glycan. The helical transmembrane segment at 454-474 threads the bilayer; that stretch reads IFNPTAVVSFLAGLIGVTVAV. The Cytoplasmic portion of the chain corresponds to 475–1077; sequence VYNKIAKSSP…HEVATHKFLQ (603 aa). Positions 604-1076 constitute a Protein kinase domain; that stretch reads FEVKKVIGHG…AHEVATHKFL (473 aa). ATP is bound by residues 610 to 618 and Lys-633; that span reads IGHGGFGVV. The interval 727 to 834 is disordered; that stretch reads MPPVVGNTTD…FVDGSDDVDN (108 aa). Polar residues predominate over residues 732 to 746; the sequence is GNTTDAENSWSTSAK. The span at 766-778 shows a compositional bias: basic and acidic residues; it reads GSDRTTAELKEES. The span at 783–796 shows a compositional bias: acidic residues; it reads ESDEESDTTEDSSS. Low complexity predominate over residues 797-808; that stretch reads SDESPSSSSGSS. Asp-933 (proton acceptor) is an active-site residue.

The protein belongs to the protein kinase superfamily. Ser/Thr protein kinase family. GCN2 subfamily. In terms of assembly, forms dimers with HSPA5/BIP in resting cells. Oligomerizes in ER-stressed cells. Post-translationally, autophosphorylated. N-glycosylated. Expressed in intestinal cells.

It localises to the endoplasmic reticulum membrane. It carries out the reaction L-seryl-[protein] + ATP = O-phospho-L-seryl-[protein] + ADP + H(+). It catalyses the reaction L-threonyl-[protein] + ATP = O-phospho-L-threonyl-[protein] + ADP + H(+). Its activity is regulated as follows. Perturbation in protein folding in the endoplasmic reticulum (ER) promotes reversible dissociation from HSPA5/BIP and oligomerization, resulting in transautophosphorylation and kinase activity induction. In terms of biological role, phosphorylates the alpha subunit of eukaryotic translation-initiation factor 2 (eIF2alpha), leading to its inactivation and thus to a rapid reduction of translational initiation and repression of global protein synthesis. May phosphorylate eIF2alpha during hypoxia. Proposed to have a role in alleviating endoplasmic reticulum stress. This Caenorhabditis elegans protein is Eukaryotic translation initiation factor 2-alpha kinase pek-1 (pek-1).